We begin with the raw amino-acid sequence, 149 residues long: Probable flagellum biosynthesis repressor protein FlbT (149 aa).

The protein belongs to the FlbT family.

In terms of biological role, has a post-transcriptional repressor function in flagellum biogenesis. Associates with the 5'-UTR of fljK mRNA and promotes its degradation. The protein is Probable flagellum biosynthesis repressor protein FlbT of Sinorhizobium medicae (strain WSM419) (Ensifer medicae).